Here is a 264-residue protein sequence, read N- to C-terminus: Acetyl-coenzyme A carboxylase carboxyl transferase subunit beta (264 aa).

A CoA carboxyltransferase N-terminal domain is found at 4-264 (LWVKCKQCQQ…CGNSLEGVES (261 aa)). Zn(2+) is bound by residues cysteine 8, cysteine 11, cysteine 27, and cysteine 29. Residues 8–29 (CKQCQQILLTKELEKNLKVCRC) form a C4-type zinc finger.

It belongs to the AccD/PCCB family. As to quaternary structure, acetyl-CoA carboxylase is a heterohexamer composed of biotin carboxyl carrier protein (AccB), biotin carboxylase (AccC) and two subunits each of ACCase subunit alpha (AccA) and ACCase subunit beta (AccD). It depends on Zn(2+) as a cofactor.

The protein localises to the cytoplasm. The enzyme catalyses N(6)-carboxybiotinyl-L-lysyl-[protein] + acetyl-CoA = N(6)-biotinyl-L-lysyl-[protein] + malonyl-CoA. It participates in lipid metabolism; malonyl-CoA biosynthesis; malonyl-CoA from acetyl-CoA: step 1/1. Component of the acetyl coenzyme A carboxylase (ACC) complex. Biotin carboxylase (BC) catalyzes the carboxylation of biotin on its carrier protein (BCCP) and then the CO(2) group is transferred by the transcarboxylase to acetyl-CoA to form malonyl-CoA. In Heliobacterium modesticaldum (strain ATCC 51547 / Ice1), this protein is Acetyl-coenzyme A carboxylase carboxyl transferase subunit beta.